A 703-amino-acid polypeptide reads, in one-letter code: Calcium-responsive transcription factor (703 aa).

Disordered stretches follow at residues 1-61 (MEQS…QNIP), 130-150 (GPLV…SDRN), and 517-539 (GNSQ…SLSP). The segment covering 9-22 (KVNHNDSEESKTDS) has biased composition (basic and acidic residues). Residues 23–34 (QHLTYMDSSEPS) are compositionally biased toward polar residues.

The protein localises to the nucleus. Acts as a transcriptional activator that mediates the calcium- and neuron-selective induction of BDNF exon III transcription. Binds to the consensus calcium-response element CaRE1 5'-CTATTTCGAG-3' sequence. This Bos taurus (Bovine) protein is Calcium-responsive transcription factor (CARF).